A 410-amino-acid polypeptide reads, in one-letter code: Testis-specific protein TEX28 (410 aa).

The interval 1–43 is disordered; sequence MVLKAEHTRSPSATLPSNVPSCRSLSSSEDGPSGPSSLADGGL. Over residues 10-23 the composition is skewed to polar residues; that stretch reads SPSATLPSNVPSCR. Low complexity predominate over residues 24–38; it reads SLSSSEDGPSGPSSL. Residues 93–128 are a coiled coil; sequence QAFEKVNQRASATIAQIEHRLHQCHQQLQELEEGCR. Positions 137 to 164 are disordered; that stretch reads ESDPANCEPPSEKALLSEPPEPGGEDGP. Residues 185 to 245 are a coiled coil; that stretch reads QGTCLETEDV…LLLESLQEEK (61 aa). Residues 336–358 traverse the membrane as a helical segment; sequence LSLATVLLVFVSTLCACPSSLIS.

It belongs to the TEX28 family. In terms of tissue distribution, testis specific.

The protein resides in the membrane. This chain is Testis-specific protein TEX28 (TEX28), found in Homo sapiens (Human).